A 202-amino-acid polypeptide reads, in one-letter code: Imidazoleglycerol-phosphate dehydratase (202 aa).

This sequence belongs to the imidazoleglycerol-phosphate dehydratase family.

The protein resides in the cytoplasm. The enzyme catalyses D-erythro-1-(imidazol-4-yl)glycerol 3-phosphate = 3-(imidazol-4-yl)-2-oxopropyl phosphate + H2O. It participates in amino-acid biosynthesis; L-histidine biosynthesis; L-histidine from 5-phospho-alpha-D-ribose 1-diphosphate: step 6/9. This is Imidazoleglycerol-phosphate dehydratase from Corynebacterium glutamicum (strain ATCC 13032 / DSM 20300 / JCM 1318 / BCRC 11384 / CCUG 27702 / LMG 3730 / NBRC 12168 / NCIMB 10025 / NRRL B-2784 / 534).